The primary structure comprises 299 residues: Protein sprouty homolog 4 (299 aa).

M1 bears the N-acetylmethionine mark. Disordered stretches follow at residues 50 to 79 (NDYI…PTPA) and 92 to 127 (FSGR…ASPR). Positions 92–107 (FSGRPSSVSSSSSTSS) are enriched in low complexity. A Phosphoserine modification is found at S125. Residues 166–273 (KCKECASPRT…GYDRLRRPGC (108 aa)) form the SPR domain.

It belongs to the sprouty family. As to quaternary structure, interacts (via C-terminus) with TESK1 (via both C- and N-termini); the interaction inhibits TESK1 kinase activity. Interacts with RAF1. Interacts with CAV1 (via C-terminus).

It localises to the cytoplasm. Its subcellular location is the cell projection. The protein localises to the ruffle membrane. In terms of biological role, suppresses the insulin receptor and EGFR-transduced MAPK signaling pathway, but does not inhibit MAPK activation by a constitutively active mutant Ras. Probably impairs the formation of GTP-Ras. Inhibits Ras-independent, but not Ras-dependent, activation of RAF1. Represses integrin-mediated cell spreading via inhibition of TESK1-mediated phosphorylation of cofilin. This is Protein sprouty homolog 4 (SPRY4) from Bos taurus (Bovine).